The chain runs to 261 residues: Enolase-phosphatase E1 (261 aa).

D16 and E18 together coordinate Mg(2+). Residues 153 to 154 (SS) and K187 each bind substrate. Residue D212 participates in Mg(2+) binding.

The protein belongs to the HAD-like hydrolase superfamily. MasA/MtnC family. As to quaternary structure, monomer. Mg(2+) is required as a cofactor.

It is found in the cytoplasm. The protein localises to the nucleus. The catalysed reaction is 5-methylsulfanyl-2,3-dioxopentyl phosphate + H2O = 1,2-dihydroxy-5-(methylsulfanyl)pent-1-en-3-one + phosphate. Its pathway is amino-acid biosynthesis; L-methionine biosynthesis via salvage pathway; L-methionine from S-methyl-5-thio-alpha-D-ribose 1-phosphate: step 3/6. It participates in amino-acid biosynthesis; L-methionine biosynthesis via salvage pathway; L-methionine from S-methyl-5-thio-alpha-D-ribose 1-phosphate: step 4/6. Bifunctional enzyme that catalyzes the enolization of 2,3-diketo-5-methylthiopentyl-1-phosphate (DK-MTP-1-P) into the intermediate 2-hydroxy-3-keto-5-methylthiopentenyl-1-phosphate (HK-MTPenyl-1-P), which is then dephosphorylated to form the acireductone 1,2-dihydroxy-3-keto-5-methylthiopentene (DHK-MTPene). The chain is Enolase-phosphatase E1 (enoph1) from Danio rerio (Zebrafish).